The following is a 236-amino-acid chain: Phosphoribosylaminoimidazole-succinocarboxamide synthase (236 aa).

The protein belongs to the SAICAR synthetase family.

The catalysed reaction is 5-amino-1-(5-phospho-D-ribosyl)imidazole-4-carboxylate + L-aspartate + ATP = (2S)-2-[5-amino-1-(5-phospho-beta-D-ribosyl)imidazole-4-carboxamido]succinate + ADP + phosphate + 2 H(+). The protein operates within purine metabolism; IMP biosynthesis via de novo pathway; 5-amino-1-(5-phospho-D-ribosyl)imidazole-4-carboxamide from 5-amino-1-(5-phospho-D-ribosyl)imidazole-4-carboxylate: step 1/2. This chain is Phosphoribosylaminoimidazole-succinocarboxamide synthase, found in Wolinella succinogenes (strain ATCC 29543 / DSM 1740 / CCUG 13145 / JCM 31913 / LMG 7466 / NCTC 11488 / FDC 602W) (Vibrio succinogenes).